A 419-amino-acid chain; its full sequence is CDP-diacylglycerol--serine O-phosphatidyltransferase 3 (419 aa).

The interval 1–51 (MPVRRRWYPPSSTAAQPSPDGGDVNTDDADACPSSRQQRPPSLPQHSAPIH) is disordered. The segment covering 33-47 (PSSRQQRPPSLPQHS) has biased composition (low complexity). A run of 7 helical transmembrane segments spans residues 103–123 (PHTV…SGVL), 142–162 (WAMI…TILI), 168–188 (VWRL…FLLF), 260–280 (LLLW…RHML), 287–307 (WWDS…WAGM), 359–379 (FIQV…TFFL), and 384–404 (WIPP…LIAI).

The protein belongs to the CDP-alcohol phosphatidyltransferase class-I family.

Its subcellular location is the endoplasmic reticulum membrane. The enzyme catalyses a CDP-1,2-diacyl-sn-glycerol + L-serine = a 1,2-diacyl-sn-glycero-3-phospho-L-serine + CMP + H(+). Its pathway is phospholipid metabolism; phosphatidylethanolamine biosynthesis; phosphatidylethanolamine from CDP-diacylglycerol: step 1/2. In terms of biological role, catalyzes a base-exchange reaction in which the polar head group of phosphatidylethanolamine (PE) or phosphatidylcholine (PC) is replaced by L-serine. The sequence is that of CDP-diacylglycerol--serine O-phosphatidyltransferase 3 (PSS3) from Oryza sativa subsp. japonica (Rice).